The primary structure comprises 268 residues: Glutamate racemase (268 aa).

Residues 14–15 and 46–47 contribute to the substrate site; these read DS and YG. Catalysis depends on Cys78, which acts as the Proton donor/acceptor. 79-80 contacts substrate; the sequence is NS. Cys190 (proton donor/acceptor) is an active-site residue. 191–192 is a binding site for substrate; it reads TH.

This sequence belongs to the aspartate/glutamate racemases family.

It catalyses the reaction L-glutamate = D-glutamate. It functions in the pathway cell wall biogenesis; peptidoglycan biosynthesis. Its function is as follows. Provides the (R)-glutamate required for cell wall biosynthesis. This chain is Glutamate racemase, found in Treponema pallidum (strain Nichols).